The primary structure comprises 93 residues: Integration host factor subunit beta (93 aa).

Belongs to the bacterial histone-like protein family. As to quaternary structure, heterodimer of an alpha and a beta chain.

Functionally, this protein is one of the two subunits of integration host factor, a specific DNA-binding protein that functions in genetic recombination as well as in transcriptional and translational control. The polypeptide is Integration host factor subunit beta (Actinobacillus pleuropneumoniae serotype 7 (strain AP76)).